A 566-amino-acid polypeptide reads, in one-letter code: Putative ABC transporter ATP-binding protein BCE_2668 (566 aa).

ABC transporter domains are found at residues 5–246 (ISFE…GLRE) and 300–533 (LKVE…ANLK). ATP-binding positions include 39 to 46 (GRSGSGKS) and 333 to 340 (GHNGAGKS).

It belongs to the ABC transporter superfamily.

The protein localises to the cell membrane. Probably part of an ABC transporter complex. Responsible for energy coupling to the transport system. The chain is Putative ABC transporter ATP-binding protein BCE_2668 from Bacillus cereus (strain ATCC 10987 / NRS 248).